We begin with the raw amino-acid sequence, 363 residues long: Fructose-bisphosphate aldolase 1 (363 aa).

Aspartate 34 is a dihydroxyacetone phosphate binding site. The D-glyceraldehyde 3-phosphate site is built by serine 36 and threonine 39. Arginine 43 serves as a coordination point for beta-D-fructose 1,6-bisphosphate. Residue lysine 107 coordinates D-glyceraldehyde 3-phosphate. Lysine 146 is a binding site for dihydroxyacetone phosphate. Glutamate 189 is a D-glyceraldehyde 3-phosphate binding site. Glutamate 189 acts as the Proton acceptor in catalysis. 3 residues coordinate dihydroxyacetone phosphate: lysine 231, serine 273, and glycine 274. Lysine 231 acts as the Schiff-base intermediate with dihydroxyacetone phosphate in catalysis. Beta-D-fructose 1,6-bisphosphate contacts are provided by residues 273–275 (SGG) and serine 301. Residues glycine 303 and arginine 304 each coordinate dihydroxyacetone phosphate. Arginine 304 contributes to the beta-D-fructose 1,6-bisphosphate binding site.

Belongs to the class I fructose-bisphosphate aldolase family. As to quaternary structure, homotetramer. Component of a complex, at least composed of ald-1, microneme protein MIC2 and ACT1. Interacts with microneme protein MIC2 (via cytoplasmic tail). Interacts with ACT1 (F-actin).

It localises to the cytoplasm. It carries out the reaction beta-D-fructose 1,6-bisphosphate = D-glyceraldehyde 3-phosphate + dihydroxyacetone phosphate. The protein operates within carbohydrate degradation; glycolysis; D-glyceraldehyde 3-phosphate and glycerone phosphate from D-glucose: step 4/4. Its function is as follows. Plays a key role in glycolysis by catalyzing the cleavage of fructose 1,6-bisphosphate into dihydroxyacetone phosphate and glyceraldehyde 3-phosphate. Forms a bridge between cell surface adhesins and the actin cytoskeleton. Required for parasite invasion of host cells. This chain is Fructose-bisphosphate aldolase 1, found in Toxoplasma gondii.